The following is a 447-amino-acid chain: UPF0210 protein LSL_0162 (447 aa).

The protein belongs to the UPF0210 family. Homodimer.

This Ligilactobacillus salivarius (strain UCC118) (Lactobacillus salivarius) protein is UPF0210 protein LSL_0162.